The sequence spans 203 residues: Proteasome subunit beta 2 (203 aa).

The propeptide at 1–9 is removed in mature form; by autocatalysis; that stretch reads MGEEFQVGA. The active-site Nucleophile is the Thr10.

Belongs to the peptidase T1B family. As to quaternary structure, the 20S proteasome core is composed of 14 alpha and 14 beta subunits that assemble into four stacked heptameric rings, resulting in a barrel-shaped structure. The two inner rings, each composed of seven catalytic beta subunits, are sandwiched by two outer rings, each composed of seven alpha subunits. The catalytic chamber with the active sites is on the inside of the barrel. Has a gated structure, the ends of the cylinder being occluded by the N-termini of the alpha-subunits. Is capped at one or both ends by the proteasome regulatory ATPase, PAN.

The protein resides in the cytoplasm. It carries out the reaction Cleavage of peptide bonds with very broad specificity.. The formation of the proteasomal ATPase PAN-20S proteasome complex, via the docking of the C-termini of PAN into the intersubunit pockets in the alpha-rings, triggers opening of the gate for substrate entry. Interconversion between the open-gate and close-gate conformations leads to a dynamic regulation of the 20S proteasome proteolysis activity. In terms of biological role, component of the proteasome core, a large protease complex with broad specificity involved in protein degradation. The sequence is that of Proteasome subunit beta 2 from Pyrobaculum neutrophilum (strain DSM 2338 / JCM 9278 / NBRC 100436 / V24Sta) (Thermoproteus neutrophilus).